A 381-amino-acid polypeptide reads, in one-letter code: Major structural protein ORF14 (381 aa).

Positions 287-307 (RQFKEKLNQEKDEKKRSINKE) form a coiled coil.

The chain is Major structural protein ORF14 from Helicobacter pylori (strain 35A).